A 169-amino-acid chain; its full sequence is Phosphopantetheine adenylyltransferase (169 aa).

Ser8 serves as a coordination point for substrate. Residues 8 to 9 (SF) and His16 each bind ATP. Substrate-binding residues include Lys40, Thr72, and Arg86. Residues 87 to 89 (GLR), Glu97, and 122 to 128 (YSFLSSS) each bind ATP.

This sequence belongs to the bacterial CoaD family. Homohexamer. Requires Mg(2+) as cofactor.

The protein localises to the cytoplasm. It catalyses the reaction (R)-4'-phosphopantetheine + ATP + H(+) = 3'-dephospho-CoA + diphosphate. It functions in the pathway cofactor biosynthesis; coenzyme A biosynthesis; CoA from (R)-pantothenate: step 4/5. Reversibly transfers an adenylyl group from ATP to 4'-phosphopantetheine, yielding dephospho-CoA (dPCoA) and pyrophosphate. The protein is Phosphopantetheine adenylyltransferase of Cyanothece sp. (strain PCC 7425 / ATCC 29141).